Reading from the N-terminus, the 425-residue chain is Receptor-like protein 55 (425 aa).

A signal peptide spans Met1 to Ser25. Residues Tyr26–Thr397 are Extracellular-facing. Asn40, Asn54, Asn79, and Asn132 each carry an N-linked (GlcNAc...) asparagine glycan. LRR repeat units lie at residues Leu144–Asn169, Met170–Ser193, Leu195–Leu216, Lys217–Leu240, Phe242–Ile264, Ser265–Glu287, and Met288–Lys313. N-linked (GlcNAc...) asparagine glycosylation is found at Asn182, Asn202, Asn223, Asn245, Asn278, Asn308, and Asn329. The segment at Pro355–Glu389 is disordered. The segment covering Asn374–Glu389 has biased composition (basic and acidic residues). Asn395 carries an N-linked (GlcNAc...) asparagine glycan. Residues Leu398–Leu418 form a helical membrane-spanning segment. At Ala419–Ile425 the chain is on the cytoplasmic side.

It belongs to the RLP family.

The protein localises to the cell membrane. Functionally, involved in plant defense. This chain is Receptor-like protein 55, found in Arabidopsis thaliana (Mouse-ear cress).